Reading from the N-terminus, the 138-residue chain is Phosphoribosyl-AMP cyclohydrolase (138 aa).

A Mg(2+)-binding site is contributed by Asp84. Position 85 (Cys85) interacts with Zn(2+). Residues Asp86 and Asp88 each coordinate Mg(2+). Zn(2+)-binding residues include Cys102 and Cys109.

This sequence belongs to the PRA-CH family. Homodimer. Mg(2+) is required as a cofactor. Zn(2+) serves as cofactor.

The protein resides in the cytoplasm. It catalyses the reaction 1-(5-phospho-beta-D-ribosyl)-5'-AMP + H2O = 1-(5-phospho-beta-D-ribosyl)-5-[(5-phospho-beta-D-ribosylamino)methylideneamino]imidazole-4-carboxamide. The protein operates within amino-acid biosynthesis; L-histidine biosynthesis; L-histidine from 5-phospho-alpha-D-ribose 1-diphosphate: step 3/9. Its function is as follows. Catalyzes the hydrolysis of the adenine ring of phosphoribosyl-AMP. This chain is Phosphoribosyl-AMP cyclohydrolase, found in Burkholderia vietnamiensis (strain G4 / LMG 22486) (Burkholderia cepacia (strain R1808)).